We begin with the raw amino-acid sequence, 270 residues long: Small ribosomal subunit protein eS1 (270 aa).

A disordered region spans residues 235-270 (GTSKGGAASTAAVAKGEEGVKVDRPEGYEPPVLETV). Low complexity predominate over residues 239–248 (GGAASTAAVA). Basic and acidic residues predominate over residues 249-261 (KGEEGVKVDRPEG).

Belongs to the eukaryotic ribosomal protein eS1 family. As to quaternary structure, component of the small ribosomal subunit. Mature ribosomes consist of a small (40S) and a large (60S) subunit. The 40S subunit contains about 33 different proteins and 1 molecule of RNA (18S). The 60S subunit contains about 49 different proteins and 3 molecules of RNA (28S, 5.8S and 5S).

The protein localises to the cytoplasm. This Ixodes scapularis (Black-legged tick) protein is Small ribosomal subunit protein eS1.